We begin with the raw amino-acid sequence, 270 residues long: Tryptophan 2,3-dioxygenase-like protein (270 aa).

The protein belongs to the tryptophan 2,3-dioxygenase family.

This is Tryptophan 2,3-dioxygenase-like protein from Xanthomonas campestris pv. campestris (strain 8004).